We begin with the raw amino-acid sequence, 329 residues long: uncharacterized protein (329 aa).

The SIS domain maps to 37–180 (LAEKILGHSG…AMLLFHSRGV (144 aa)). 52-57 (GVGKSG) provides a ligand contact to ATP. CBS domains are found at residues 206-265 (MFPK…GGEV) and 274-329 (MTAN…AGLL).

It belongs to the SIS family. GutQ/KpsF subfamily.

This is an uncharacterized protein from Chlamydia pneumoniae (Chlamydophila pneumoniae).